The chain runs to 174 residues: Protein GrpE (174 aa).

The interval 1–35 (MAQDIKNEEVEEVQEEEVVETAEETTPEKSELDLA) is disordered. Residues 9-25 (EVEEVQEEEVVETAEET) are compositionally biased toward acidic residues. Positions 26 to 35 (TPEKSELDLA) are enriched in basic and acidic residues.

It belongs to the GrpE family. Homodimer.

Its subcellular location is the cytoplasm. Participates actively in the response to hyperosmotic and heat shock by preventing the aggregation of stress-denatured proteins, in association with DnaK and GrpE. It is the nucleotide exchange factor for DnaK and may function as a thermosensor. Unfolded proteins bind initially to DnaJ; upon interaction with the DnaJ-bound protein, DnaK hydrolyzes its bound ATP, resulting in the formation of a stable complex. GrpE releases ADP from DnaK; ATP binding to DnaK triggers the release of the substrate protein, thus completing the reaction cycle. Several rounds of ATP-dependent interactions between DnaJ, DnaK and GrpE are required for fully efficient folding. In Streptococcus pneumoniae (strain ATCC BAA-255 / R6), this protein is Protein GrpE.